A 361-amino-acid polypeptide reads, in one-letter code: D-alanine--D-alanine ligase (361 aa).

The 211-residue stretch at 134–344 (KILAQRAGVP…YTDLITKLID (211 aa)) folds into the ATP-grasp domain. 169 to 224 (ASQLGSDLFVKPSNQGSSVGVSHVTNEKEYKVALAEAFKYDDKVLVEETVHGTEVE) contributes to the ATP binding site. Mg(2+)-binding residues include Asp-297, Glu-311, and Asn-313.

This sequence belongs to the D-alanine--D-alanine ligase family. Requires Mg(2+) as cofactor. The cofactor is Mn(2+).

It localises to the cytoplasm. The catalysed reaction is 2 D-alanine + ATP = D-alanyl-D-alanine + ADP + phosphate + H(+). The protein operates within cell wall biogenesis; peptidoglycan biosynthesis. Its function is as follows. Cell wall formation. This chain is D-alanine--D-alanine ligase, found in Lactobacillus gasseri (strain ATCC 33323 / DSM 20243 / BCRC 14619 / CIP 102991 / JCM 1131 / KCTC 3163 / NCIMB 11718 / NCTC 13722 / AM63).